Here is a 211-residue protein sequence, read N- to C-terminus: Ubiquitin-conjugating enzyme E2 S-B (211 aa).

A UBC core domain is found at 11-157 (HIIRRVYKEV…ARLMTDIHAQ (147 aa)). The active-site Glycyl thioester intermediate is Cys-95. The disordered stretch occupies residues 158 to 211 (GTSLRGKDPTDPCSSASTPVVSGDGPMAKKHAGDRDKKLAAKKKTDKKRALRRL). Basic residues predominate over residues 197 to 211 (AAKKKTDKKRALRRL).

Belongs to the ubiquitin-conjugating enzyme family.

It carries out the reaction S-ubiquitinyl-[E1 ubiquitin-activating enzyme]-L-cysteine + [E2 ubiquitin-conjugating enzyme]-L-cysteine = [E1 ubiquitin-activating enzyme]-L-cysteine + S-ubiquitinyl-[E2 ubiquitin-conjugating enzyme]-L-cysteine.. Its pathway is protein modification; protein ubiquitination. In terms of biological role, catalyzes the covalent attachment of ubiquitin to other proteins. Acts as an essential factor of the anaphase promoting complex/cyclosome (APC/C), a cell cycle-regulated ubiquitin ligase that controls progression through mitosis. Acts by specifically elongating 'Lys-11'-linked polyubiquitin chains initiated by the E2 enzyme ube2c/ubch10 on APC/C substrates, enhancing the degradation of APC/C substrates by the proteasome and promoting mitotic exit. This Xenopus laevis (African clawed frog) protein is Ubiquitin-conjugating enzyme E2 S-B (ube2s-b).